The following is a 181-amino-acid chain: Ribonuclease HII (181 aa).

Residues 1-181 (MICGIDEVGR…NLHRRSFKFI (181 aa)) enclose the RNase H type-2 domain. Positions 6, 7, and 98 each coordinate a divalent metal cation.

It belongs to the RNase HII family. The cofactor is Mn(2+). Requires Mg(2+) as cofactor.

Its subcellular location is the cytoplasm. It catalyses the reaction Endonucleolytic cleavage to 5'-phosphomonoester.. Its function is as follows. Endonuclease that specifically degrades the RNA of RNA-DNA hybrids. This chain is Ribonuclease HII, found in Borrelia hermsii (strain HS1 / DAH).